The chain runs to 430 residues: MATLSVKPSRRFQLPDWHTNSYLLSTNAQLQRDASHQIRQEARVLRNETNNQTIWDEHDNRTRLVERIDTVNRWKEMLDKCLTDLDAEIDALTQMKESAEQNLQAKNLPLDVAIECLTLRESRRDIDVVKDPVEDELHKEVEVIEATKKALQQKVSQAFEQLCLLQEVQQQLNSDHRGKMETLEIDRGCLSLNLRSPNISLKVDPTRVPDGSTTLQQWDDFSRFNKDRAEAEMKAATELREATALTIAETNNELEAQRVATEFAFRKRLREMEKVYSELKWQEKNTLEEIAELQEDIRHLEEDLRTKLLSLKLSHTRLEARTYRPNVELCRDQAQYGLTDEVHQLEATIAALKQKLAQAQDALDALCKHLARLQADIACKANSMLLDTKCMDTRRKLTVPAERFVPEVDTFTRTTNSTLSPLKSCQLELA.

2 coiled-coil regions span residues 80-162 (KCLT…FEQL) and 225-382 (NKDR…CKAN).

Belongs to the tektin family. In terms of assembly, microtubule inner protein component of sperm flagellar doublet microtubules. May interact with CCDC172. In terms of processing, tyrosine phosphorylated. Post-translationally, ubiquitinated, leading to its degradation. Deubiquitinated by USP16, promoting its stability. Expressed at high levels in testis, trachea and fetal lung, and at lower levels in ovary, pituitary, adult lung, fetal brain and fetal kidney.

It is found in the cytoplasm. The protein resides in the cytoskeleton. Its subcellular location is the cilium axoneme. The protein localises to the flagellum axoneme. It localises to the microtubule organizing center. Functionally, microtubule inner protein (MIP) part of the dynein-decorated doublet microtubules (DMTs) in cilia and flagellar axoneme. Plays a key role in the assembly or attachment of the inner dynein arm to microtubules in sperm flagella and tracheal cilia. Forms filamentous polymers in the walls of ciliary and flagellar microtubules. The chain is Tektin-2 from Homo sapiens (Human).